The following is a 210-amino-acid chain: Probable GTP-binding protein EngB (210 aa).

One can recognise an EngB-type G domain in the interval 25-199; that stretch reads CGIEVAFAGR…RQKLDSWFSE (175 aa). GTP contacts are provided by residues 33-40, 60-64, 78-81, 145-148, and 178-180; these read GRSNAGKS, GRTQL, DLPG, TKAD, and FSS. Mg(2+)-binding residues include S40 and T62.

It belongs to the TRAFAC class TrmE-Era-EngA-EngB-Septin-like GTPase superfamily. EngB GTPase family. The cofactor is Mg(2+).

Necessary for normal cell division and for the maintenance of normal septation. The polypeptide is Probable GTP-binding protein EngB (Salmonella paratyphi C (strain RKS4594)).